Reading from the N-terminus, the 551-residue chain is MYRPLVARLLRDSVATRKGSSHFARRFSHSLPFATVDAEELSGAKPAEVLNLVQGNWGGSSSWHTVVDPLNGEPFIKVAEVDETEIKPFVESLSKCPKHGLHNPFKSPERYLLYGDISTKAGHMLSIPKVSEFFARLIQRVAPKSYHQALGEVQVTQKFFENFTGDQVRFLARSFGVPGNHLGQQSNGFRWPFGPVAIITPFNFPLEIPVLQLMGALYMGNKPLLKVDSKVSIVMEQMMRLLHYCGLPVGDADFVNSDGKAMNKILLEANPRMTLFTGSSRVAEKLALDLKGRIKLEDAGFDWKILGPDVNEADYVAWVCDQDAYACSGQKCSAQSILFMHENWAATPLISRLKELAERRKLEDLTVGPVLTVTTEAMLDHLNKLLQIPGAKLLFGGKPLENHTIPSIYGAVKPTAVYVPLEEILKVSNYELVTKEIFGPFQVVTEYKNSQLPMVLEALERMHAHLTAAVVSNDQLFLQEVIGNTVNGTTYAGLRARTTGAPQNHWFGPAGDPRGAGIGTPEAIKLVWSCHREIIYDIGPVSHHWEIPPST.

278–283 (GSSRVA) is a binding site for NAD(+). The active-site Proton acceptor is glutamate 297. Catalysis depends on cysteine 332, which acts as the Nucleophile.

It belongs to the aldehyde dehydrogenase family. In terms of tissue distribution, in uninfected plants, highest levels found in stems. In plants infected with the flax rust, highest levels in leaves. Higher levels of expression in infected leaves than uninfected stems.

It catalyses the reaction an aldehyde + NAD(+) + H2O = a carboxylate + NADH + 2 H(+). Could be involved in facilitating the biotrophic relationship between the plant and the rust fungus. This Linum usitatissimum (Flax) protein is Probable aldehyde dehydrogenase (FIS1).